The primary structure comprises 377 residues: Palmitoyltransferase PFA4 (377 aa).

Over 1 to 9 (MAIKLKNRW) the chain is Cytoplasmic. The chain crosses the membrane as a helical span at residues 10–30 (LGVAIPAFLVALIGYGSHYFI). The Lumenal segment spans residues 31 to 122 (LSNFLSWNEQ…NCVGHSNFPH (92 aa)). The DHHC domain maps to 78–128 (NYCKKCRVYKPERAHHCKTCNQCVLAMDHHCPWTLNCVGHSNFPHFMRFLF). Cysteine 108 (S-palmitoyl cysteine intermediate) is an active-site residue. A helical membrane pass occupies residues 123-143 (FMRFLFWVIFSTAYLLFLLIG). The Cytoplasmic portion of the chain corresponds to 144–163 (RIYLLWSIRHTAFHHRSTSE). Residues 164–184 (IIFICIMTPMDAFVLLTVSSL) form a helical membrane-spanning segment. Residues 185 to 377 (LGRCIYNQCL…SDFGVDTELE (193 aa)) lie on the Lumenal side of the membrane.

Belongs to the DHHC palmitoyltransferase family. PFA4 subfamily.

Its subcellular location is the endoplasmic reticulum membrane. It carries out the reaction L-cysteinyl-[protein] + hexadecanoyl-CoA = S-hexadecanoyl-L-cysteinyl-[protein] + CoA. Functionally, mediates the reversible addition of palmitate to target proteins, thereby regulating their membrane association and biological function. The chain is Palmitoyltransferase PFA4 from Kluyveromyces lactis (strain ATCC 8585 / CBS 2359 / DSM 70799 / NBRC 1267 / NRRL Y-1140 / WM37) (Yeast).